The primary structure comprises 343 residues: DNA repair and recombination protein RadA (343 aa).

Residue 107–114 coordinates ATP; the sequence is GEFGAGKS.

This sequence belongs to the eukaryotic RecA-like protein family.

Its function is as follows. Involved in DNA repair and in homologous recombination. Binds and assemble on single-stranded DNA to form a nucleoprotein filament. Hydrolyzes ATP in a ssDNA-dependent manner and promotes DNA strand exchange between homologous DNA molecules. The polypeptide is DNA repair and recombination protein RadA (Haloquadratum walsbyi (strain DSM 16790 / HBSQ001)).